Reading from the N-terminus, the 217-residue chain is Large ribosomal subunit protein uL1 (217 aa).

It belongs to the universal ribosomal protein uL1 family. Part of the 50S ribosomal subunit.

Functionally, binds directly to 23S rRNA. Probably involved in E site tRNA release. In terms of biological role, protein L1 is also a translational repressor protein, it controls the translation of its operon by binding to its mRNA. This Aeropyrum pernix (strain ATCC 700893 / DSM 11879 / JCM 9820 / NBRC 100138 / K1) protein is Large ribosomal subunit protein uL1.